We begin with the raw amino-acid sequence, 224 residues long: Cytidylate kinase (224 aa).

13-21 (GPSASGKGT) serves as a coordination point for ATP.

This sequence belongs to the cytidylate kinase family. Type 1 subfamily.

It is found in the cytoplasm. It carries out the reaction CMP + ATP = CDP + ADP. The catalysed reaction is dCMP + ATP = dCDP + ADP. The sequence is that of Cytidylate kinase from Nitrosomonas eutropha (strain DSM 101675 / C91 / Nm57).